We begin with the raw amino-acid sequence, 327 residues long: Phenylalanine--tRNA ligase alpha subunit (327 aa).

Residue glutamate 252 coordinates Mg(2+).

Belongs to the class-II aminoacyl-tRNA synthetase family. Phe-tRNA synthetase alpha subunit type 1 subfamily. In terms of assembly, tetramer of two alpha and two beta subunits. The cofactor is Mg(2+).

Its subcellular location is the cytoplasm. It catalyses the reaction tRNA(Phe) + L-phenylalanine + ATP = L-phenylalanyl-tRNA(Phe) + AMP + diphosphate + H(+). In Escherichia coli O139:H28 (strain E24377A / ETEC), this protein is Phenylalanine--tRNA ligase alpha subunit.